Consider the following 1244-residue polypeptide: ATP-dependent helicase/nuclease subunit A (1244 aa).

Residues 4–475 (KKWTAEQLAA…IGLSKNFRSR (472 aa)) form the UvrD-like helicase ATP-binding domain. 25–32 (AAAGAGKT) lines the ATP pocket. A UvrD-like helicase C-terminal domain is found at 515–816 (EDVKTATGPV…RIMSIHKSKG (302 aa)). The segment at 538–559 (EQNTDSAEEKLTDGEEQEDLDS) is disordered.

This sequence belongs to the helicase family. AddA subfamily. As to quaternary structure, heterodimer of AddA and AddB/RexB. Requires Mg(2+) as cofactor.

It catalyses the reaction Couples ATP hydrolysis with the unwinding of duplex DNA by translocating in the 3'-5' direction.. The enzyme catalyses ATP + H2O = ADP + phosphate + H(+). The heterodimer acts as both an ATP-dependent DNA helicase and an ATP-dependent, dual-direction single-stranded exonuclease. Recognizes the chi site generating a DNA molecule suitable for the initiation of homologous recombination. The AddA nuclease domain is required for chi fragment generation; this subunit has the helicase and 3' -&gt; 5' nuclease activities. This is ATP-dependent helicase/nuclease subunit A from Desulforamulus reducens (strain ATCC BAA-1160 / DSM 100696 / MI-1) (Desulfotomaculum reducens).